A 115-amino-acid polypeptide reads, in one-letter code: Protachykinin-1 (115 aa).

The first 19 residues, 1–19, serve as a signal peptide directing secretion; sequence MKILVALAVLALVSTQLFA. Residues 20 to 56 constitute a propeptide that is removed on maturation; the sequence is EDIRANDDLNYWSDWSDSDQIKEELPEPFEHLLQRIA. Methionine amide occurs at positions 68 and 92.

The protein belongs to the tachykinin family. Post-translationally, the substance P form is cleaved at Pro-59 by the prolyl endopeptidase FAP (seprase) activity (in vitro). Substance P is also cleaved and degraded by Angiotensin-converting enzyme (ACE) and neprilysin (MME).

Its subcellular location is the secreted. Tachykinins are active peptides which excite neurons, evoke behavioral responses, are potent vasodilators and secretagogues, and contract (directly or indirectly) many smooth muscles. This is Protachykinin-1 (TAC1) from Oryctolagus cuniculus (Rabbit).